The sequence spans 164 residues: FMN reductase (NADH) RutF (164 aa).

This sequence belongs to the non-flavoprotein flavin reductase family. RutF subfamily.

It carries out the reaction FMNH2 + NAD(+) = FMN + NADH + 2 H(+). In terms of biological role, catalyzes the reduction of FMN to FMNH2 which is used to reduce pyrimidine by RutA via the Rut pathway. In Klebsiella pneumoniae subsp. pneumoniae (strain ATCC 700721 / MGH 78578), this protein is FMN reductase (NADH) RutF.